The following is a 387-amino-acid chain: Eukaryotic translation initiation factor 3 subunit M (387 aa).

In terms of domain architecture, PCI spans 181–340 (LSSKVMIELL…HKVHITSTMH (160 aa)).

The protein belongs to the eIF-3 subunit M family. As to quaternary structure, component of the eukaryotic translation initiation factor 3 (eIF-3) complex. The eIF-3 complex interacts with pix.

It is found in the cytoplasm. The protein localises to the golgi apparatus. In terms of biological role, component of the eukaryotic translation initiation factor 3 (eIF-3) complex, which is involved in protein synthesis of a specialized repertoire of mRNAs and, together with other initiation factors, stimulates binding of mRNA and methionyl-tRNAi to the 40S ribosome. The eIF-3 complex specifically targets and initiates translation of a subset of mRNAs involved in cell proliferation. The polypeptide is Eukaryotic translation initiation factor 3 subunit M (Drosophila erecta (Fruit fly)).